Consider the following 294-residue polypeptide: Phosphatidylserine decarboxylase proenzyme (294 aa).

Active-site charge relay system; for autoendoproteolytic cleavage activity residues include aspartate 113, histidine 169, and serine 256. Serine 256 serves as the catalytic Schiff-base intermediate with substrate; via pyruvic acid; for decarboxylase activity. Serine 256 is subject to Pyruvic acid (Ser); by autocatalysis.

It belongs to the phosphatidylserine decarboxylase family. PSD-B subfamily. Prokaryotic type II sub-subfamily. Heterodimer of a large membrane-associated beta subunit and a small pyruvoyl-containing alpha subunit. Requires pyruvate as cofactor. Is synthesized initially as an inactive proenzyme. Formation of the active enzyme involves a self-maturation process in which the active site pyruvoyl group is generated from an internal serine residue via an autocatalytic post-translational modification. Two non-identical subunits are generated from the proenzyme in this reaction, and the pyruvate is formed at the N-terminus of the alpha chain, which is derived from the carboxyl end of the proenzyme. The autoendoproteolytic cleavage occurs by a canonical serine protease mechanism, in which the side chain hydroxyl group of the serine supplies its oxygen atom to form the C-terminus of the beta chain, while the remainder of the serine residue undergoes an oxidative deamination to produce ammonia and the pyruvoyl prosthetic group on the alpha chain. During this reaction, the Ser that is part of the protease active site of the proenzyme becomes the pyruvoyl prosthetic group, which constitutes an essential element of the active site of the mature decarboxylase.

It localises to the cell membrane. The enzyme catalyses a 1,2-diacyl-sn-glycero-3-phospho-L-serine + H(+) = a 1,2-diacyl-sn-glycero-3-phosphoethanolamine + CO2. It functions in the pathway phospholipid metabolism; phosphatidylethanolamine biosynthesis; phosphatidylethanolamine from CDP-diacylglycerol: step 2/2. Its function is as follows. Catalyzes the formation of phosphatidylethanolamine (PtdEtn) from phosphatidylserine (PtdSer). The polypeptide is Phosphatidylserine decarboxylase proenzyme (Clostridium perfringens (strain SM101 / Type A)).